The sequence spans 462 residues: Argininosuccinate lyase (462 aa).

Belongs to the lyase 1 family. Argininosuccinate lyase subfamily.

The protein localises to the cytoplasm. The catalysed reaction is 2-(N(omega)-L-arginino)succinate = fumarate + L-arginine. It participates in amino-acid biosynthesis; L-arginine biosynthesis; L-arginine from L-ornithine and carbamoyl phosphate: step 3/3. The protein is Argininosuccinate lyase of Bacillus anthracis (strain A0248).